The chain runs to 343 residues: Geranylgeranyl pyrophosphate synthase (343 aa).

The segment covering 1–12 has biased composition (basic and acidic residues); the sequence is MAYTVEPREHSK. Positions 1–26 are disordered; that stretch reads MAYTVEPREHSKNTTLPTVAMPPSPP. K69, R72, and H101 together coordinate isopentenyl diphosphate. Residues D108 and D112 each coordinate Mg(2+). R117 is a dimethylallyl diphosphate binding site. R118 lines the isopentenyl diphosphate pocket. 2 residues coordinate dimethylallyl diphosphate: T196 and Q229. Mg(2+) is bound at residue D232. Residues N236, K246, and K256 each coordinate dimethylallyl diphosphate.

The protein belongs to the FPP/GGPP synthase family. Mg(2+) serves as cofactor.

It catalyses the reaction isopentenyl diphosphate + dimethylallyl diphosphate = (2E)-geranyl diphosphate + diphosphate. It carries out the reaction isopentenyl diphosphate + (2E)-geranyl diphosphate = (2E,6E)-farnesyl diphosphate + diphosphate. The enzyme catalyses isopentenyl diphosphate + (2E,6E)-farnesyl diphosphate = (2E,6E,10E)-geranylgeranyl diphosphate + diphosphate. It functions in the pathway mycotoxin biosynthesis. In terms of biological role, geranylgeranyl pyrophosphate synthase; part of the gene cluster that mediates the biosynthesis of aphidicolin, a specific inhibitor of eukaryotic DNA synthesis and DNA polymerase alpha. The geranylgeranyl pyrophosphate synthase GGS is required for supplying a sufficient amount of geranylgeranyl diphosphate (GGDP), the general precursor of diterpenes. The diterpene synthase ACS then catalyzes the conversion of geranylgeranyl diphosphate to aphidicolan-16-beta-ol via the intermediate syn-copalyldiphosphate (syn-CDP). In addition to aphidicolan-16-beta-ol, the enzyme also produces low levels of amphidicol-15-ene and amphidicol-16-ene. The cytochrome P450 monooxygenase P450-2 then catalyzes the two-step hydroxylation from aphidicolan-16-beta-ol to 3-deoxyaphidicolin via a 17,3-deoxyaphidicolin intermediate. Finally, the cytochrome P450 monooxygenase P450-1 converts 3-deoxyaphidicolin to aphidicolin. This chain is Geranylgeranyl pyrophosphate synthase (GGS), found in Neocamarosporium betae (Beet black rot fungus).